The following is a 419-amino-acid chain: Multifunctional CCA protein (419 aa).

The ATP site is built by glycine 8 and arginine 11. Glycine 8 and arginine 11 together coordinate CTP. Residues aspartate 21 and aspartate 23 each contribute to the Mg(2+) site. 3 residues coordinate ATP: arginine 91, arginine 141, and arginine 144. CTP is bound by residues arginine 91, arginine 141, and arginine 144. The 102-residue stretch at 230 to 331 (TGVHVMMVLD…VRLLERCDAL (102 aa)) folds into the HD domain.

This sequence belongs to the tRNA nucleotidyltransferase/poly(A) polymerase family. Bacterial CCA-adding enzyme type 1 subfamily. In terms of assembly, monomer. Can also form homodimers and oligomers. Requires Mg(2+) as cofactor. Ni(2+) serves as cofactor.

It catalyses the reaction a tRNA precursor + 2 CTP + ATP = a tRNA with a 3' CCA end + 3 diphosphate. It carries out the reaction a tRNA with a 3' CCA end + 2 CTP + ATP = a tRNA with a 3' CCACCA end + 3 diphosphate. Its function is as follows. Catalyzes the addition and repair of the essential 3'-terminal CCA sequence in tRNAs without using a nucleic acid template. Adds these three nucleotides in the order of C, C, and A to the tRNA nucleotide-73, using CTP and ATP as substrates and producing inorganic pyrophosphate. tRNA 3'-terminal CCA addition is required both for tRNA processing and repair. Also involved in tRNA surveillance by mediating tandem CCA addition to generate a CCACCA at the 3' terminus of unstable tRNAs. While stable tRNAs receive only 3'-terminal CCA, unstable tRNAs are marked with CCACCA and rapidly degraded. In Paracidovorax citrulli (strain AAC00-1) (Acidovorax citrulli), this protein is Multifunctional CCA protein.